The following is a 648-amino-acid chain: RAF proto-oncogene serine/threonine-protein kinase (648 aa).

Serine 29 carries the phosphoserine; by MAPK1 modification. At serine 43 the chain carries Phosphoserine; by PKA and MAPK1. The region spanning 56-131 (NTIRVFLPNK…IGEELQVDFL (76 aa)) is the RBD domain. A Phorbol-ester/DAG-type zinc finger spans residues 138-184 (THNFARKTFLKLAFCDICQKFLLNGFRCQTCGYKFHEHCSTKVPTMC). The Zn(2+) site is built by histidine 139, cysteine 152, cysteine 155, cysteine 165, cysteine 168, histidine 173, cysteine 176, and cysteine 184. The disordered stretch occupies residues 220–334 (SVSRMPVSSQ…QEKNKIRPRG (115 aa)). Positions 239–271 (TFNTSSPSSEGSLSQRQRSTSTPNVHMVSTTLP) are enriched in polar residues. Residue serine 252 is modified to Phosphoserine. Phosphoserine; by PKA, PKC and PKB/AKT1 is present on serine 259. At threonine 268 the chain carries Phosphothreonine; by autocatalysis. A Phosphothreonine; by PKA modification is found at threonine 269. The span at 275–285 (RMIEDAIRSHS) shows a compositional bias: basic and acidic residues. Positions 286–301 (ESASPSALSSSPNNLS) are enriched in low complexity. Residue serine 289 is modified to Phosphoserine; by MAPK1. Serine 296 is subject to Phosphoserine. At serine 301 the chain carries Phosphoserine; by MAPK1. An interaction with PEBP1/RKIP region spans residues 331 to 349 (RPRGQRDSSYYWEIEASEV). Phosphoserine; by PAK1, PAK2, PAK3 and PAK5 is present on serine 338. The residue at position 339 (serine 339) is a Phosphoserine; by PAK1, PAK2 and PAK3. A phosphotyrosine; by SRC mark is found at tyrosine 340 and tyrosine 341. Positions 349–609 (VMLSTRIGSG…PQILSSIELL (261 aa)) constitute a Protein kinase domain. Residues 355–363 (IGSGSFGTV) and lysine 375 each bind ATP. Aspartate 468 functions as the Proton acceptor in the catalytic mechanism. Serine 471 bears the Phosphoserine mark. The residue at position 491 (threonine 491) is a Phosphothreonine. Position 494 is a phosphoserine (serine 494). Position 499 is a phosphoserine; by PKC (serine 499). A Symmetric dimethylarginine; by PRMT5 modification is found at arginine 563. Serine 621 carries the post-translational modification Phosphoserine. At serine 642 the chain carries Phosphoserine; by MAPK1.

It belongs to the protein kinase superfamily. TKL Ser/Thr protein kinase family. RAF subfamily. In terms of assembly, monomer. Homodimer. Heterodimerizes with BRAF and this heterodimer possesses a highly increased kinase activity compared to the respective homodimers or monomers. Heterodimerization is mitogen-regulated and enhanced by 14-3-3 proteins. MAPK1/ERK2 activation can induce a negative feedback that promotes the dissociation of the heterodimer. Forms a multiprotein complex with Ras (M-Ras/MRAS), SHOC2 and protein phosphatase 1 (PPP1CA, PPP1CB and PPP1CC). Interacts with LZTR1. Interacts with Ras proteins; the interaction is antagonized by RIN1. Weakly interacts with RIT1. Interacts (via N-terminus) with RGS14 (via RBD domains); the interaction mediates the formation of a ternary complex with BRAF, a ternary complex inhibited by GNAI1. Probably forms a complex composed of chaperones HSP90 and HSP70, co-chaperones CDC37, PPP5C, TSC1 and client protein TSC2, CDK4, AKT, RAF1 and NR3C1; this complex does not contain co-chaperones STIP1/HOP and PTGES3/p23. Interacts with STK3/MST2; the interaction inhibits its pro-apoptotic activity. Interacts (when phosphorylated at Ser-259) with YWHAZ (unphosphorylated at 'Thr-232'). Interacts with MAP2K1/MEK1 and MAP2K2/MEK2. Interacts with MAP3K5/ASF1 (via N-terminus) and this interaction inhibits the proapoptotic function of MAP3K5/ASK1. Interacts with PAK1 (via kinase domain). The phosphorylated form interacts with PIN1. The Ser-338 and Ser-339 phosphorylated form (by PAK1) interacts with BCL2. Interacts with PEBP1/RKIP and this interaction is enhanced if RAF1 is phosphorylated on residues Ser-338, Ser-339, Tyr-340 and Tyr-341. Interacts with ADCY2, ADCY5, ADCY6, DGKH, RCAN1/DSCR1, PPP1R12A, PKB/AKT1, PPP2CA, PPP2R1B, SPRY2, SPRY4, CNKSR1/CNK1, KSR2 and PHB/prohibitin. Interacts with ROCK2. In its active form, interacts with PRMT5. Interacts with FAM83B; displaces 14-3-3 proteins from RAF1 and activates RAF1. Interacts with PDE8A; the interaction promotes RAF1 activity. Interacts with MFHAS1. Interacts with GLS. Interacts with NEK10 and MAP2K1; the interaction is direct with NEK10 and required for ERK1/2-signaling pathway activation in response to UV irradiation. Zn(2+) is required as a cofactor. Phosphorylation at Thr-269, Ser-338, Tyr-341, Thr-491 and Ser-494 results in its activation. Phosphorylation at Ser-29, Ser-43, Ser-289, Ser-296, Ser-301 and Ser-642 by MAPK1/ERK2 results in its inactivation. Phosphorylation at Ser-259 induces the interaction with YWHAZ and inactivates kinase activity. Dephosphorylation of Ser-259 by the SHOC2-MRAS-PP1c (SMP) complex consisting of SHOC2, GTP-bound M-Ras/MRAS and the catalytic subunit of protein phosphatase 1 (PPP1CA, PPP1CB or PPP1CC); this relieves inactivation and stimulates kinase activity. Phosphorylation at Ser-338 by PAK1 and PAK5 and Ser-339 by PAK1 is required for its mitochondrial localization. Phosphorylation at Ser-621 in response to growth factor treatment stabilizes the protein, possibly by preventing proteasomal degradation. Phosphorylation at Ser-289, Ser-296, Ser-301, Ser-338 and Ser-621 are somehow linked to the methylation potential of cells. Treatment of cells with HGF in the presence of the methylation inhibitor 5'-methylthioadenosine (MTA) results in increased phosphorylation at Ser-338 and Ser-621 and decreased phosphorylation at Ser-296, Ser-301 and Ser-338. Dephosphorylation at Ser-338 by PPP5C results in an activity decrease. Post-translationally, methylated at Arg-563 in response to EGF treatment. This modification leads to destabilization of the protein, possibly through proteasomal degradation. In skeletal muscle, isoform 1 is more abundant than isoform 2.

It localises to the cytoplasm. The protein resides in the cell membrane. It is found in the mitochondrion. Its subcellular location is the nucleus. It catalyses the reaction L-seryl-[protein] + ATP = O-phospho-L-seryl-[protein] + ADP + H(+). The catalysed reaction is L-threonyl-[protein] + ATP = O-phospho-L-threonyl-[protein] + ADP + H(+). With respect to regulation, regulation is a highly complex process involving membrane recruitment, protein-protein interactions, dimerization, and phosphorylation/dephosphorylation events. Ras-GTP recruits RAF1 to the membrane, thereby promoting its activation. The inactive conformation of RAF1 is maintained by autoinhibitory interactions occurring between the N-terminal regulatory and the C-terminal catalytic domains and by the binding of a 14-3-3 protein that contacts two phosphorylation sites, Ser-259 and Ser-621. Upon mitogenic stimulation, Ras and PPP2R1A cooperate to release autoinhibition and the subsequent phosphorylation of activating sites: Ser-338, Tyr-341, Thr-491, and Ser-494, yields a fully active kinase. Through a negative feedback mechanism involving MAPK1/ERK2, RAF1 is phosphorylated on Ser-29, Ser-43, Ser-289, Ser-296, Ser-301 and Ser-642 by MAPK1/ERK2, which yields an inactive, desensitized kinase. The signaling-competent conformation of RAF1 is finally re-established by the coordinated action of PIN1, a prolyl isomerase that converts pSer and pThr residues from the cis to the trans conformation, which is preferentially recognized and dephosphorylated by PPP2R1A. Activated by homodimerization and heterodimerization (with BRAF). Also regulated through association with other proteins such as KSR2, CNKSR1/CNK1, PEBP1/RKIP, PHB/prohibitin and SPRY4. PEBP1/RKIP acts by dissociating RAF1 from its substrates MAP2K1/MEK1 and MAP2K2/MEK2. PHB/prohibitin facilitates the displacement of 14-3-3 from RAF1 by activated Ras, thereby promoting cell membrane localization and phosphorylation of RAF1 at the activating Ser-338. SPRY4 inhibits Ras-independent, but not Ras-dependent, activation of RAF1. CNKSR1/CNK1 regulates Src-mediated RAF1 activation. Serine/threonine-protein kinase that acts as a regulatory link between the membrane-associated Ras GTPases and the MAPK/ERK cascade, and this critical regulatory link functions as a switch determining cell fate decisions including proliferation, differentiation, apoptosis, survival and oncogenic transformation. RAF1 activation initiates a mitogen-activated protein kinase (MAPK) cascade that comprises a sequential phosphorylation of the dual-specific MAPK kinases (MAP2K1/MEK1 and MAP2K2/MEK2) and the extracellular signal-regulated kinases (MAPK3/ERK1 and MAPK1/ERK2). The phosphorylated form of RAF1 (on residues Ser-338 and Ser-339, by PAK1) phosphorylates BAD/Bcl2-antagonist of cell death at 'Ser-75'. Phosphorylates adenylyl cyclases: ADCY2, ADCY5 and ADCY6, resulting in their activation. Phosphorylates PPP1R12A resulting in inhibition of the phosphatase activity. Phosphorylates TNNT2/cardiac muscle troponin T. Can promote NF-kB activation and inhibit signal transducers involved in motility (ROCK2), apoptosis (MAP3K5/ASK1 and STK3/MST2), proliferation and angiogenesis (RB1). Can protect cells from apoptosis also by translocating to the mitochondria where it binds BCL2 and displaces BAD/Bcl2-antagonist of cell death. Regulates Rho signaling and migration, and is required for normal wound healing. Plays a role in the oncogenic transformation of epithelial cells via repression of the TJ protein, occludin (OCLN) by inducing the up-regulation of a transcriptional repressor SNAI2/SLUG, which induces down-regulation of OCLN. Restricts caspase activation in response to selected stimuli, notably Fas stimulation, pathogen-mediated macrophage apoptosis, and erythroid differentiation. The protein is RAF proto-oncogene serine/threonine-protein kinase of Homo sapiens (Human).